Consider the following 929-residue polypeptide: Chitin synthase 1 (929 aa).

Residues 1–12 (MAYRGAGGPGGG) show a composition bias toward gly residues. Disordered stretches follow at residues 1–43 (MAYR…QEDE) and 114–156 (MGGH…GGGL). Polar residues-rich tracts occupy residues 21–33 (QDLN…SNVQ) and 140–149 (SWVQRQNPNA). Asparagine 560 is a glycosylation site (N-linked (GlcNAc...) asparagine). A run of 5 helical transmembrane segments spans residues 587 to 607 (FFFH…WFSL), 643 to 663 (LFNA…FILA), 678 to 698 (SFFV…YLVV), 730 to 750 (VILL…FMYL), and 758 to 778 (SFPY…VYAF). A glycan (N-linked (GlcNAc...) asparagine) is linked at asparagine 801. A run of 2 helical transmembrane segments spans residues 857–877 (TMLV…ITSD) and 897–917 (FLLF…LWFL).

It belongs to the chitin synthase family. Class III subfamily.

The protein resides in the cell membrane. The catalysed reaction is [(1-&gt;4)-N-acetyl-beta-D-glucosaminyl](n) + UDP-N-acetyl-alpha-D-glucosamine = [(1-&gt;4)-N-acetyl-beta-D-glucosaminyl](n+1) + UDP + H(+). In terms of biological role, polymerizes chitin, a structural polymer of the cell wall and septum, by transferring the sugar moiety of UDP-GlcNAc to the non-reducing end of the growing chitin polymer. CHS1 and CHS3 have compensatory functions in cell wall modifications in responses to stresses. Involved in appressoria formation and required for full virulence. The polypeptide is Chitin synthase 1 (Pyricularia oryzae (strain 70-15 / ATCC MYA-4617 / FGSC 8958) (Rice blast fungus)).